The following is a 118-amino-acid chain: Putative membrane protein insertion efficiency factor (118 aa).

It belongs to the UPF0161 family.

It is found in the cell inner membrane. Functionally, could be involved in insertion of integral membrane proteins into the membrane. This Helicobacter pylori (strain P12) protein is Putative membrane protein insertion efficiency factor.